We begin with the raw amino-acid sequence, 186 residues long: Elongation factor P (186 aa).

K33 is modified (N6-(3,6-diaminohexanoyl)-5-hydroxylysine).

Belongs to the elongation factor P family. Post-translationally, may be beta-lysylated on the epsilon-amino group of Lys-33 by the combined action of EpmA and EpmB, and then hydroxylated on the C5 position of the same residue by EpmC (if this protein is present). Lysylation is critical for the stimulatory effect of EF-P on peptide-bond formation. The lysylation moiety may extend toward the peptidyltransferase center and stabilize the terminal 3-CCA end of the tRNA. Hydroxylation of the C5 position on Lys-33 may allow additional potential stabilizing hydrogen-bond interactions with the P-tRNA.

It localises to the cytoplasm. It functions in the pathway protein biosynthesis; polypeptide chain elongation. Its function is as follows. Involved in peptide bond synthesis. Alleviates ribosome stalling that occurs when 3 or more consecutive Pro residues or the sequence PPG is present in a protein, possibly by augmenting the peptidyl transferase activity of the ribosome. Modification of Lys-33 is required for alleviation. This chain is Elongation factor P, found in Acidithiobacillus ferrooxidans (strain ATCC 23270 / DSM 14882 / CIP 104768 / NCIMB 8455) (Ferrobacillus ferrooxidans (strain ATCC 23270)).